Reading from the N-terminus, the 89-residue chain is Small ribosomal subunit protein uS17 (89 aa).

Belongs to the universal ribosomal protein uS17 family. Part of the 30S ribosomal subunit.

In terms of biological role, one of the primary rRNA binding proteins, it binds specifically to the 5'-end of 16S ribosomal RNA. In Baumannia cicadellinicola subsp. Homalodisca coagulata, this protein is Small ribosomal subunit protein uS17.